Reading from the N-terminus, the 485-residue chain is NADH-quinone oxidoreductase subunit N (485 aa).

A run of 14 helical transmembrane segments spans residues 8–28 (LIALLPLLIVGLTVVVVMLSI), 35–55 (FLNATLSVIGLNAALVSLWFV), 71–91 (GFAMLYTGLVLLASLATCTFA), 105–125 (FYLLVLIAALGGILLANANHL), 127–147 (SLFLGIELISLPLFGLVGYAF), 159–179 (YTILSAAASSFLLFGMALVYA), 203–223 (LLAGFGLMIVGLGFKLSLVPF), 235–255 (PAPVSTFLATASKIVIFGVVM), 271–291 (VVLAIIAFASIIFGNLMALSQ), 297–317 (LLGYSSISHLGYLLVALIALQ), 326–346 (VGVYLAGYLFSSLGAFGVVSL), 373–393 (AAVMTVMMLSLAGIPMTLGFI), 408–430 (WWLVGAVVVGSAIGLYYYLRVAV), and 455–475 (IVVLISALLVLVLGVWPQPLI).

This sequence belongs to the complex I subunit 2 family. NDH-1 is composed of 13 different subunits. Subunits NuoA, H, J, K, L, M, N constitute the membrane sector of the complex.

It is found in the cell inner membrane. It catalyses the reaction a quinone + NADH + 5 H(+)(in) = a quinol + NAD(+) + 4 H(+)(out). NDH-1 shuttles electrons from NADH, via FMN and iron-sulfur (Fe-S) centers, to quinones in the respiratory chain. The immediate electron acceptor for the enzyme in this species is believed to be ubiquinone. Couples the redox reaction to proton translocation (for every two electrons transferred, four hydrogen ions are translocated across the cytoplasmic membrane), and thus conserves the redox energy in a proton gradient. The chain is NADH-quinone oxidoreductase subunit N from Shigella dysenteriae serotype 1 (strain Sd197).